Here is a 137-residue protein sequence, read N- to C-terminus: MSSLVRKIISTAKAPAAIGPYSQAVLVDRTIYISGQLGMDPASGQLVPGGVAEEAKQALTNIGEILKAAGCDFTNVVKATVLLADINDFSTVNDVYKQYFQSSFPARAAYQVAALPKGGRVEIEAIAVQGPLTTASL.

Position 2 is an N-acetylserine (serine 2). Lysine 13 and lysine 67 each carry N6-succinyllysine. Residue threonine 74 is modified to Phosphothreonine. Position 136 is a phosphoserine (serine 136).

Belongs to the RutC family. Homotrimer. Interacts with YTHDF2.

The protein localises to the cytoplasm. It localises to the nucleus. Its subcellular location is the peroxisome. It is found in the mitochondrion. The catalysed reaction is 2-iminobutanoate + H2O = 2-oxobutanoate + NH4(+). It catalyses the reaction 2-iminopropanoate + H2O = pyruvate + NH4(+). Functionally, catalyzes the hydrolytic deamination of enamine/imine intermediates that form during the course of normal metabolism. May facilitate the release of ammonia from these potentially toxic reactive metabolites, reducing their impact on cellular components. It may act on enamine/imine intermediates formed by several types of pyridoxal-5'-phosphate-dependent dehydratases including L-threonine dehydratase. Its function is as follows. Also promotes endoribonucleolytic cleavage of some transcripts by promoting recruitment of the ribonuclease P/MRP complex. Acts by bridging YTHDF2 and the ribonuclease P/MRP complex. RIDA/HRSP12 binds to N6-methyladenosine (m6A)-containing mRNAs containing a 5'-GGUUC-3' motif: cooperative binding of RIDA/HRSP12 and YTHDF2 to such transcripts lead to recruitment of the ribonuclease P/MRP complex and subsequent endoribonucleolytic cleavage. The chain is 2-iminobutanoate/2-iminopropanoate deaminase from Bos taurus (Bovine).